Consider the following 940-residue polypeptide: Isoleucine--tRNA ligase (940 aa).

The short motif at 58–68 (PYANGSIHIGH) is the 'HIGH' region element. Glutamate 564 provides a ligand contact to L-isoleucyl-5'-AMP. The 'KMSKS' region signature appears at 605 to 609 (KMSKS). Residue lysine 608 coordinates ATP. Cysteine 903, cysteine 906, cysteine 923, and cysteine 926 together coordinate Zn(2+).

Belongs to the class-I aminoacyl-tRNA synthetase family. IleS type 1 subfamily. In terms of assembly, monomer. Zn(2+) serves as cofactor.

Its subcellular location is the cytoplasm. It carries out the reaction tRNA(Ile) + L-isoleucine + ATP = L-isoleucyl-tRNA(Ile) + AMP + diphosphate. Catalyzes the attachment of isoleucine to tRNA(Ile). As IleRS can inadvertently accommodate and process structurally similar amino acids such as valine, to avoid such errors it has two additional distinct tRNA(Ile)-dependent editing activities. One activity is designated as 'pretransfer' editing and involves the hydrolysis of activated Val-AMP. The other activity is designated 'posttransfer' editing and involves deacylation of mischarged Val-tRNA(Ile). The polypeptide is Isoleucine--tRNA ligase (Shewanella sp. (strain W3-18-1)).